Reading from the N-terminus, the 382-residue chain is S-adenosylmethionine synthase (382 aa).

His-15 contributes to the ATP binding site. Asp-17 contacts Mg(2+). Position 43 (Glu-43) interacts with K(+). 2 residues coordinate L-methionine: Glu-56 and Gln-99. Residues 99-109 (QSGDIAQGVDR) form a flexible loop region. Residues 164 to 166 (DAK), 230 to 231 (KF), Asp-239, 245 to 246 (RK), Ala-262, and Lys-266 each bind ATP. Asp-239 contributes to the L-methionine binding site. L-methionine is bound at residue Lys-270.

This sequence belongs to the AdoMet synthase family. As to quaternary structure, homotetramer; dimer of dimers. The cofactor is Mg(2+). Requires K(+) as cofactor.

It is found in the cytoplasm. The enzyme catalyses L-methionine + ATP + H2O = S-adenosyl-L-methionine + phosphate + diphosphate. The protein operates within amino-acid biosynthesis; S-adenosyl-L-methionine biosynthesis; S-adenosyl-L-methionine from L-methionine: step 1/1. Functionally, catalyzes the formation of S-adenosylmethionine (AdoMet) from methionine and ATP. The overall synthetic reaction is composed of two sequential steps, AdoMet formation and the subsequent tripolyphosphate hydrolysis which occurs prior to release of AdoMet from the enzyme. The sequence is that of S-adenosylmethionine synthase from Dichelobacter nodosus (strain VCS1703A).